The primary structure comprises 1027 residues: LLGL scribble cell polarity complex component 2 (1027 aa).

WD repeat units lie at residues 36–69, 76–117, 132–169, 193–227, 233–268, 282–324, 332–366, 388–464, 508–583, and 592–653; these read SALG…FMGL, VLQI…EESF, VTEI…DRTI, ALQE…LSHF, LENA…NPEP, AITK…GQQT, VIDF…VIDL, TCSH…YKLS, QKIF…FVLV, and TSLA…LRQS. Ser653 is subject to Phosphoserine. Basic residues predominate over residues 654-669; sequence FRRMRRSRVSSHKRRP. The segment at 654-678 is disordered; the sequence is FRRMRRSRVSSHKRRPGGPTGEAQA. 4 WD repeats span residues 715 to 771, 780 to 832, 837 to 890, and 904 to 927; these read VRTL…KEIQ, GILV…VSAK, LTAL…VRYS, and VFTK…SLST. The interval 940-981 is disordered; the sequence is TKAKKHNRPSNGNGTGLKMTSSGHVRNSKSQSDGDEKKPGPV. Residues 957–970 show a composition bias toward polar residues; sequence KMTSSGHVRNSKSQ. Ser971 and Ser1022 each carry phosphoserine.

It belongs to the WD repeat L(2)GL family. Interacts with GPSM2/LGN, PRKCI/aPKC and PARD6B/Par-6. The complex is enhanced during mitosis. Interacts with DCAF1. In terms of processing, phosphorylated at Ser-653 by PRKCI. Phosphorylation is enhanced during cell polarization induced by calcium. Phosphorylation may occur during the cell-cell contact-induced cell polarization and may contribute to the segregation of LLGL2 from the PRKCI/aPKC and PARD6B/Par-6 complex.

It localises to the cytoplasm. Its function is as follows. Part of a complex with GPSM2/LGN, PRKCI/aPKC and PARD6B/Par-6, which may ensure the correct organization and orientation of bipolar spindles for normal cell division. This complex plays roles in the initial phase of the establishment of epithelial cell polarity. The sequence is that of LLGL scribble cell polarity complex component 2 (Llgl2) from Mus musculus (Mouse).